We begin with the raw amino-acid sequence, 453 residues long: C4-dicarboxylate TRAP transporter large permease protein DctM (453 aa).

The next 13 helical transmembrane spans lie at 2–22 (AVAL…PIAI), 50–70 (AFAG…STFM), 82–102 (FAIA…VVAC), 104–124 (MFAA…SIVI), 139–159 (GVIC…VMVV), 172–192 (FLGG…AIYI), 217–237 (ASWG…GIFT), 243–263 (AVAA…MGPF), 289–309 (LYDA…ALIL), 326–346 (MLSA…ILLV), 356–376 (LLVI…IDPI), 380–400 (IMMV…LNLF), and 417–437 (ALPW…VPWV).

It belongs to the TRAP transporter large permease family. In terms of assembly, the complex comprises the extracytoplasmic solute receptor protein DctP, and the two transmembrane proteins DctQ and DctM.

It is found in the cell inner membrane. Functionally, part of the tripartite ATP-independent periplasmic (TRAP) transport system DctPQM involved in C4-dicarboxylates uptake. The sequence is that of C4-dicarboxylate TRAP transporter large permease protein DctM from Vibrio cholerae serotype O1 (strain ATCC 39315 / El Tor Inaba N16961).